A 533-amino-acid polypeptide reads, in one-letter code: Putative sel1-like repeat-containing protein L21 (533 aa).

Sel1-like repeat units lie at residues Val105–Leu140, Ser141–Tyr172, Tyr173–Cys206, Asn207–Asn242, and Tyr243–His278.

The protein is Putative sel1-like repeat-containing protein L21 of Acanthamoeba polyphaga mimivirus (APMV).